Consider the following 118-residue polypeptide: Holo-[acyl-carrier-protein] synthase (118 aa).

The Mg(2+) site is built by D8 and E58.

This sequence belongs to the P-Pant transferase superfamily. AcpS family. Requires Mg(2+) as cofactor.

The protein resides in the cytoplasm. The enzyme catalyses apo-[ACP] + CoA = holo-[ACP] + adenosine 3',5'-bisphosphate + H(+). Transfers the 4'-phosphopantetheine moiety from coenzyme A to a Ser of acyl-carrier-protein. The chain is Holo-[acyl-carrier-protein] synthase from Streptococcus pyogenes serotype M1.